Consider the following 78-residue polypeptide: Small ribosomal subunit protein bS16c (78 aa).

This sequence belongs to the bacterial ribosomal protein bS16 family.

Its subcellular location is the plastid. The protein localises to the chloroplast. The protein is Small ribosomal subunit protein bS16c of Adiantum capillus-veneris (Maidenhair fern).